The primary structure comprises 95 residues: Putative regulatory protein Pmob_0099 (95 aa).

This sequence belongs to the RemA family.

The polypeptide is Putative regulatory protein Pmob_0099 (Petrotoga mobilis (strain DSM 10674 / SJ95)).